Reading from the N-terminus, the 331-residue chain is Small ribosomal subunit protein uS2 (331 aa).

This sequence belongs to the universal ribosomal protein uS2 family.

In Rhodopseudomonas palustris (strain HaA2), this protein is Small ribosomal subunit protein uS2.